The following is a 107-amino-acid chain: uncharacterized protein (107 aa).

It is found in the mitochondrion. This is an uncharacterized protein from Arabidopsis thaliana (Mouse-ear cress).